The following is a 446-amino-acid chain: Adenylosuccinate synthetase (446 aa).

GTP-binding positions include 20 to 26 (GDEGKGK) and 48 to 50 (GHT). D21 serves as the catalytic Proton acceptor. Residues D21 and G48 each contribute to the Mg(2+) site. IMP contacts are provided by residues 21-24 (DEGK), 46-49 (NAGH), T137, R151, Q232, T247, and R319. Residue H49 is the Proton donor of the active site. Residue 315-321 (SVTGRPR) coordinates substrate. GTP is bound by residues R321, 347-349 (KLD), and 429-431 (STG).

The protein belongs to the adenylosuccinate synthetase family. As to quaternary structure, homodimer. The cofactor is Mg(2+).

The protein localises to the cytoplasm. It catalyses the reaction IMP + L-aspartate + GTP = N(6)-(1,2-dicarboxyethyl)-AMP + GDP + phosphate + 2 H(+). It participates in purine metabolism; AMP biosynthesis via de novo pathway; AMP from IMP: step 1/2. In terms of biological role, plays an important role in the de novo pathway of purine nucleotide biosynthesis. Catalyzes the first committed step in the biosynthesis of AMP from IMP. The protein is Adenylosuccinate synthetase of Polynucleobacter asymbioticus (strain DSM 18221 / CIP 109841 / QLW-P1DMWA-1) (Polynucleobacter necessarius subsp. asymbioticus).